We begin with the raw amino-acid sequence, 400 residues long: Exodeoxyribonuclease 7 large subunit (400 aa).

Belongs to the XseA family. Heterooligomer composed of large and small subunits.

The protein localises to the cytoplasm. The catalysed reaction is Exonucleolytic cleavage in either 5'- to 3'- or 3'- to 5'-direction to yield nucleoside 5'-phosphates.. Its function is as follows. Bidirectionally degrades single-stranded DNA into large acid-insoluble oligonucleotides, which are then degraded further into small acid-soluble oligonucleotides. In Clostridium novyi (strain NT), this protein is Exodeoxyribonuclease 7 large subunit.